The following is a 175-amino-acid chain: RNA pyrophosphohydrolase (175 aa).

The Nudix hydrolase domain maps to 6-149; the sequence is GYRPNVGIVI…KRDVYRRVMK (144 aa). Positions 38-59 match the Nudix box motif; that stretch reads GGINAGETAEQAMYRELFEEVG.

It belongs to the Nudix hydrolase family. RppH subfamily. The cofactor is a divalent metal cation.

Functionally, accelerates the degradation of transcripts by removing pyrophosphate from the 5'-end of triphosphorylated RNA, leading to a more labile monophosphorylated state that can stimulate subsequent ribonuclease cleavage. The sequence is that of RNA pyrophosphohydrolase from Sodalis glossinidius (strain morsitans).